Here is a 209-residue protein sequence, read N- to C-terminus: Small ribosomal subunit protein uS3 (209 aa).

Positions 38–107 constitute a KH type-2 domain; that stretch reads IRNFIKKNYN…KFGIDIIELK (70 aa).

It belongs to the universal ribosomal protein uS3 family. Part of the 30S ribosomal subunit. Forms a tight complex with proteins S10 and S14.

In terms of biological role, binds the lower part of the 30S subunit head. Binds mRNA in the 70S ribosome, positioning it for translation. The chain is Small ribosomal subunit protein uS3 from Fervidobacterium nodosum (strain ATCC 35602 / DSM 5306 / Rt17-B1).